We begin with the raw amino-acid sequence, 252 residues long: Flap endonuclease Xni (252 aa).

A Mg(2+)-binding site is contributed by D105. A 5'-3' exonuclease domain is found at 162-250; the sequence is ERTQFIDYLA…LNANLSQFRL (89 aa). L172, A173, P181, V183, and I186 together coordinate K(+). The interaction with DNA stretch occupies residues 185–190; the sequence is GIGPKS.

It belongs to the Xni family. Requires Mg(2+) as cofactor. The cofactor is K(+).

In terms of biological role, has flap endonuclease activity. During DNA replication, flap endonucleases cleave the 5'-overhanging flap structure that is generated by displacement synthesis when DNA polymerase encounters the 5'-end of a downstream Okazaki fragment. The chain is Flap endonuclease Xni from Shewanella woodyi (strain ATCC 51908 / MS32).